The following is a 318-amino-acid chain: Geranylfarnesyl diphosphate synthase (318 aa).

Residues Lys-31, Arg-34, and His-65 each coordinate isopentenyl diphosphate. Residues Asp-72 and Asp-76 each coordinate Mg(2+). Arg-81 is a binding site for an all-trans-polyprenyl diphosphate. Arg-82 lines the isopentenyl diphosphate pocket. The an all-trans-polyprenyl diphosphate site is built by Lys-166, Thr-167, and Gln-204.

It belongs to the FPP/GGPP synthase family. As to quaternary structure, homodimer. Mg(2+) is required as a cofactor.

The catalysed reaction is isopentenyl diphosphate + (2E,6E,10E)-geranylgeranyl diphosphate = (2E,6E,10E,14E)-geranylfarnesyl diphosphate + diphosphate. Functionally, probably involved in biosynthesis of the precursor for C25 (sesterterpanyl chain) moiety of C25-C25 diether (2,3-di-O-sesterterpanyl-sn-glycero) membrane lipid. Catalyzes the condensation of isopentenyl pyrophosphate with the allylic pyrophosphates to yield all-trans geranylfarnesyl diphosphate (GFPP). Geranylgeranyl diphosphate (GGPP) is the preferred substrate, however methylallyl diphosphate (DMAPP), farnesyl diphosphate (FPP) and geranyl diphosphate (GPP) can also be used as allylic substrate. This chain is Geranylfarnesyl diphosphate synthase (fgs), found in Aeropyrum pernix.